The primary structure comprises 124 residues: Glutaredoxin-2 (124 aa).

An intrachain disulfide couples C13 to C16.

This sequence belongs to the glutaredoxin family. Homodimer.

Its subcellular location is the host cytoplasm. Its function is as follows. Glutaredoxin necessary for virion morphogenesis and virus replication. Functions as a thiol-disulfide transfer protein between membrane-associated OPG128 and substrates OPG095 or OPG053. The complete pathway for formation of disulfide bonds in intracellular virion membrane proteins sequentially involves oxidation of OPG072, OPG128 and OPG088. Exhibit thioltransferase and dehydroascorbate reductase activities in vitro. In Bos taurus (Bovine), this protein is Glutaredoxin-2 (OPG088).